The primary structure comprises 430 residues: 3-phosphoshikimate 1-carboxyvinyltransferase (430 aa).

3-phosphoshikimate-binding residues include K23, S24, and R28. K23 contributes to the phosphoenolpyruvate binding site. Phosphoenolpyruvate-binding residues include G93 and R121. S166, Q168, D313, and K340 together coordinate 3-phosphoshikimate. Q168 is a phosphoenolpyruvate binding site. The active-site Proton acceptor is the D313. R344 and R386 together coordinate phosphoenolpyruvate.

It belongs to the EPSP synthase family. In terms of assembly, monomer.

Its subcellular location is the cytoplasm. The enzyme catalyses 3-phosphoshikimate + phosphoenolpyruvate = 5-O-(1-carboxyvinyl)-3-phosphoshikimate + phosphate. The protein operates within metabolic intermediate biosynthesis; chorismate biosynthesis; chorismate from D-erythrose 4-phosphate and phosphoenolpyruvate: step 6/7. Functionally, catalyzes the transfer of the enolpyruvyl moiety of phosphoenolpyruvate (PEP) to the 5-hydroxyl of shikimate-3-phosphate (S3P) to produce enolpyruvyl shikimate-3-phosphate and inorganic phosphate. The chain is 3-phosphoshikimate 1-carboxyvinyltransferase from Anaeromyxobacter sp. (strain Fw109-5).